The sequence spans 522 residues: tRNA-2-methylthio-N(6)-dimethylallyladenosine synthase (522 aa).

Low complexity predominate over residues M1–P26. The tract at residues M1–Q27 is disordered. An MTTase N-terminal domain is found at R28–H143. [4Fe-4S] cluster contacts are provided by C37, C72, C106, C180, C184, and C187. Residues R166–E396 enclose the Radical SAM core domain. The region spanning A399 to S469 is the TRAM domain. The tract at residues G481 to S522 is disordered. Residues V496–S511 show a composition bias toward gly residues.

The protein belongs to the methylthiotransferase family. MiaB subfamily. Monomer. [4Fe-4S] cluster is required as a cofactor.

It is found in the cytoplasm. It catalyses the reaction N(6)-dimethylallyladenosine(37) in tRNA + (sulfur carrier)-SH + AH2 + 2 S-adenosyl-L-methionine = 2-methylsulfanyl-N(6)-dimethylallyladenosine(37) in tRNA + (sulfur carrier)-H + 5'-deoxyadenosine + L-methionine + A + S-adenosyl-L-homocysteine + 2 H(+). In terms of biological role, catalyzes the methylthiolation of N6-(dimethylallyl)adenosine (i(6)A), leading to the formation of 2-methylthio-N6-(dimethylallyl)adenosine (ms(2)i(6)A) at position 37 in tRNAs that read codons beginning with uridine. This is tRNA-2-methylthio-N(6)-dimethylallyladenosine synthase from Arthrobacter sp. (strain FB24).